Consider the following 219-residue polypeptide: Mitochondrial fission factor homolog A (219 aa).

Residues 1 to 199 (MAEINRMQYE…ENKERVKHEM (199 aa)) are Cytoplasmic-facing. Residues 164 to 194 (DLALADAASLRRQIIKLNRRLLLLEEENKER) adopt a coiled-coil conformation. Residues 200-217 (TMYSIIIIFGLLNSWLWL) form a helical; Anchor for type IV membrane protein membrane-spanning segment. Residues 218–219 (RR) are Extracellular-facing.

Belongs to the Tango11 family.

It localises to the mitochondrion outer membrane. Its subcellular location is the peroxisome. It is found in the cytoplasmic vesicle. The protein resides in the secretory vesicle. The protein localises to the synaptic vesicle. Functionally, plays a role in mitochondrial and peroxisomal fission. Promotes the recruitment and association of the fission mediator dynamin-related protein 1 (DNM1L) to the mitochondrial surface. The protein is Mitochondrial fission factor homolog A (mff-a) of Xenopus laevis (African clawed frog).